The primary structure comprises 382 residues: V-type proton ATPase subunit C 1 (382 aa).

Position 2 is an N-acetylthreonine (Thr-2).

Belongs to the V-ATPase C subunit family. In terms of assembly, V-ATPase is a heteromultimeric enzyme made up of two complexes: the ATP-hydrolytic V1 complex and the proton translocation V0 complex. The V1 complex consists of three catalytic AB heterodimers that form a heterohexamer, three peripheral stalks each consisting of EG heterodimers, one central rotor including subunits D and F, and the regulatory subunits C and H. The proton translocation complex V0 consists of the proton transport subunit a, a ring of proteolipid subunits c9c'', rotary subunit d, subunits e and f, and the accessory subunits ATP6AP1/Ac45 and ATP6AP2/PRR. As to expression, expressed in brain (at protein level).

The protein localises to the cytoplasmic vesicle. It localises to the secretory vesicle. The protein resides in the synaptic vesicle membrane. It is found in the clathrin-coated vesicle membrane. Its function is as follows. Subunit of the V1 complex of vacuolar(H+)-ATPase (V-ATPase), a multisubunit enzyme composed of a peripheral complex (V1) that hydrolyzes ATP and a membrane integral complex (V0) that translocates protons. V-ATPase is responsible for acidifying and maintaining the pH of intracellular compartments and in some cell types, is targeted to the plasma membrane, where it is responsible for acidifying the extracellular environment. Subunit C is necessary for the assembly of the catalytic sector of the enzyme and is likely to have a specific function in its catalytic activity. The polypeptide is V-type proton ATPase subunit C 1 (Atp6v1c1) (Rattus norvegicus (Rat)).